Consider the following 418-residue polypeptide: Thyroid hormone receptor alpha-B (418 aa).

The tract at residues 1–40 (MDQNLSGLDCLSEPDEKRWPDGKRKRKNSQCMGKSGMSGD) is disordered. A modulating region spans residues 1-60 (MDQNLSGLDCLSEPDEKRWPDGKRKRKNSQCMGKSGMSGDSLVSLPPAGYIPSYLDKDEP). NR C4-type zinc fingers lie at residues 61-81 (CVVC…CEGC) and 99-123 (CKYD…FKKC). The nuclear receptor DNA-binding region spans 61–128 (CVVCSDKATG…RFKKCIAVGM (68 aa)). In terms of domain architecture, NR LBD spans 171-415 (EEWELIRIVT…PPLFLEVFED (245 aa)).

This sequence belongs to the nuclear hormone receptor family. NR1 subfamily. As to quaternary structure, binds to thyroid hormone receptor element (TRE) weakly as homodimers and monomers, but binds TRE with much higher affinity as heterodimers with retinoid X receptors. Can bind DNA as a heterodimer with either rxra or rxrg.

It is found in the nucleus. In terms of biological role, high affinity receptor for triiodothyronine (T3). This is Thyroid hormone receptor alpha-B (thra-b) from Xenopus laevis (African clawed frog).